Consider the following 183-residue polypeptide: Glutathione-regulated potassium-efflux system ancillary protein KefG (183 aa).

Belongs to the NAD(P)H dehydrogenase (quinone) family. KefG subfamily. In terms of assembly, interacts with KefB.

Its subcellular location is the cell inner membrane. It catalyses the reaction a quinone + NADH + H(+) = a quinol + NAD(+). The catalysed reaction is a quinone + NADPH + H(+) = a quinol + NADP(+). Its function is as follows. Regulatory subunit of a potassium efflux system that confers protection against electrophiles. Required for full activity of KefB. The polypeptide is Glutathione-regulated potassium-efflux system ancillary protein KefG (Salmonella enteritidis PT4 (strain P125109)).